A 206-amino-acid polypeptide reads, in one-letter code: Protein MIS12 homolog (206 aa).

Residues 102 to 206 are a coiled coil; that stretch reads DKCQETNPFS…EKESRRLETQ (105 aa).

The protein belongs to the mis12 family. Component of the MIS12 complex composed of MIS12, DSN1, NSL1 and PMF1. Also interacts with KNL1, CBX3, CBX5, NDC80 and ZWINT.

It localises to the chromosome. The protein localises to the centromere. The protein resides in the kinetochore. In terms of biological role, part of the MIS12 complex which is required for normal chromosome alignment and segregation and for kinetochore formation during mitosis. Essential for proper kinetochore microtubule attachments. This is Protein MIS12 homolog from Mus musculus (Mouse).